Reading from the N-terminus, the 346-residue chain is Biotin synthase (346 aa).

The 219-residue stretch at 38–256 (RQVQVSTLLS…IAVARIMMPT (219 aa)) folds into the Radical SAM core domain. Cysteine 53, cysteine 57, and cysteine 60 together coordinate [4Fe-4S] cluster. [2Fe-2S] cluster-binding residues include cysteine 97, cysteine 128, cysteine 188, and arginine 260.

Belongs to the radical SAM superfamily. Biotin synthase family. Homodimer. The cofactor is [4Fe-4S] cluster. Requires [2Fe-2S] cluster as cofactor.

The enzyme catalyses (4R,5S)-dethiobiotin + (sulfur carrier)-SH + 2 reduced [2Fe-2S]-[ferredoxin] + 2 S-adenosyl-L-methionine = (sulfur carrier)-H + biotin + 2 5'-deoxyadenosine + 2 L-methionine + 2 oxidized [2Fe-2S]-[ferredoxin]. The protein operates within cofactor biosynthesis; biotin biosynthesis; biotin from 7,8-diaminononanoate: step 2/2. Functionally, catalyzes the conversion of dethiobiotin (DTB) to biotin by the insertion of a sulfur atom into dethiobiotin via a radical-based mechanism. In Escherichia coli O6:K15:H31 (strain 536 / UPEC), this protein is Biotin synthase.